The chain runs to 81 residues: Sulfur carrier protein TusA (81 aa).

The Cysteine persulfide intermediate role is filled by Cys-19.

This sequence belongs to the sulfur carrier protein TusA family.

The protein localises to the cytoplasm. Its function is as follows. Sulfur carrier protein which probably makes part of a sulfur-relay system. This chain is Sulfur carrier protein TusA, found in Shewanella putrefaciens (strain CN-32 / ATCC BAA-453).